Consider the following 115-residue polypeptide: NAD(P)H-quinone oxidoreductase subunit M (115 aa).

Belongs to the complex I NdhM subunit family. NDH-1 can be composed of about 15 different subunits; different subcomplexes with different compositions have been identified which probably have different functions.

Its subcellular location is the cellular thylakoid membrane. It carries out the reaction a plastoquinone + NADH + (n+1) H(+)(in) = a plastoquinol + NAD(+) + n H(+)(out). The enzyme catalyses a plastoquinone + NADPH + (n+1) H(+)(in) = a plastoquinol + NADP(+) + n H(+)(out). Its function is as follows. NDH-1 shuttles electrons from an unknown electron donor, via FMN and iron-sulfur (Fe-S) centers, to quinones in the respiratory and/or the photosynthetic chain. The immediate electron acceptor for the enzyme in this species is believed to be plastoquinone. Couples the redox reaction to proton translocation, and thus conserves the redox energy in a proton gradient. Cyanobacterial NDH-1 also plays a role in inorganic carbon-concentration. The chain is NAD(P)H-quinone oxidoreductase subunit M from Prochlorococcus marinus (strain MIT 9215).